The primary structure comprises 31 residues: uncharacterized protein (31 aa).

Positions 1–31 (MKKLERMSEVSQMCSEAKKNRKRMSVVSSVA) are disordered.

This is an uncharacterized protein from Sulfolobus islandicus filamentous virus (isolate Iceland/Hveragerdi) (SIFV).